We begin with the raw amino-acid sequence, 202 residues long: Methylthioribulose-1-phosphate dehydratase (202 aa).

2 residues coordinate Zn(2+): histidine 93 and histidine 95.

It belongs to the aldolase class II family. MtnB subfamily. It depends on Zn(2+) as a cofactor.

The enzyme catalyses 5-(methylsulfanyl)-D-ribulose 1-phosphate = 5-methylsulfanyl-2,3-dioxopentyl phosphate + H2O. Its pathway is amino-acid biosynthesis; L-methionine biosynthesis via salvage pathway; L-methionine from S-methyl-5-thio-alpha-D-ribose 1-phosphate: step 2/6. In terms of biological role, catalyzes the dehydration of methylthioribulose-1-phosphate (MTRu-1-P) into 2,3-diketo-5-methylthiopentyl-1-phosphate (DK-MTP-1-P). The polypeptide is Methylthioribulose-1-phosphate dehydratase (Klebsiella pneumoniae (strain 342)).